We begin with the raw amino-acid sequence, 403 residues long: NADH-quinone oxidoreductase subunit D (403 aa).

It belongs to the complex I 49 kDa subunit family. As to quaternary structure, NDH-1 is composed of 14 different subunits. Subunits NuoB, C, D, E, F, and G constitute the peripheral sector of the complex.

It localises to the cell inner membrane. It carries out the reaction a quinone + NADH + 5 H(+)(in) = a quinol + NAD(+) + 4 H(+)(out). In terms of biological role, NDH-1 shuttles electrons from NADH, via FMN and iron-sulfur (Fe-S) centers, to quinones in the respiratory chain. The immediate electron acceptor for the enzyme in this species is believed to be ubiquinone. Couples the redox reaction to proton translocation (for every two electrons transferred, four hydrogen ions are translocated across the cytoplasmic membrane), and thus conserves the redox energy in a proton gradient. The polypeptide is NADH-quinone oxidoreductase subunit D (Pelobacter propionicus (strain DSM 2379 / NBRC 103807 / OttBd1)).